Consider the following 463-residue polypeptide: FAD-dependent monooxygenase nodM (463 aa).

Residues 5–25 (EFKVIIVGGSLAGLTLAHCLL) form a helical membrane-spanning segment. FAD-binding residues include Glu35, Gly49, Arg108, Asp305, and Ala318. The chain crosses the membrane as a helical span at residues 438 to 458 (ILLGFTGVFTSALAMVVLLHI).

It belongs to the paxM FAD-dependent monooxygenase family. FAD serves as cofactor.

The protein resides in the membrane. Its pathway is secondary metabolite biosynthesis. FAD-dependent monooxygenase; part of the gene cluster that mediates the biosynthesis of the indole diterpenes nodulisporic acids (NA). Nodulisporic acid A (NAA) and its chemically modified derivatives are of particular significance because of their highly potent insecticidal activity against blood-feeding arthropods and lack of observable adverse effects on mammals, in particular the tremogenicity associated with the paspaline-derived IDTs is not observed. The geranylgeranyl diphosphate (GGPP) synthase ggs1, localized outside of the cluster, is proposed to catalyze the first step in nodulisporic acid biosynthesis via conversion of farnesyl pyrophosphate and isopentyl pyrophosphate into geranylgeranyl pyrophosphate (GGPP). Condensation of indole-3-glycerol phosphate with GGPP by the prenyl transferase nodC then forms 3-geranylgeranylindole (3-GGI). Epoxidation by the FAD-dependent monooxygenase nodM leads to a single-epoxidized-GGI that is substrate of the terpene cyclase nodB for cyclization to yield emindole SB. The terminal methyl carbon, C28, of emindole SB is then oxidized by the cytochrome P450 monooxygenase nodW to produce nodulisporic acid F (NAF), the pentacyclic core of NAA. NAF is converted to nodulisporic acid E (NAE) via prenylation. This step is probably performed by one of the indole diterpene prenyltransferases nodD1 or nodD2. Several oxidation steps performed by the FAD-linked oxidoreductase nodO and one of the cytochrome P450 monooxygenase nodR, nodX or nodZ further convert NAE to nodulisporic acid D (NAD). NAD is substrate of cytochrome P450 monooxygenase nodJ to produce the precursor of nodulisporic acid C (NAC), converted to NAC by one of the indole diterpene prenyltransferases nodD1 or nodD2. The FAD-dependent monooxygenase nodY2 then oxidizes NAC to nodulisporic acid B (NAB). Finally NAB is converted to NAA by one of the cytochrome P450 monooxygenases nodR, nodX or nodZ. This Hypoxylon pulicicidum protein is FAD-dependent monooxygenase nodM.